Consider the following 130-residue polypeptide: Follitropin subunit beta (130 aa).

The first 20 residues, 1–20 (MMKLIQLCILFWCWRAICCH), serve as a signal peptide directing secretion. Disulfide bonds link Cys-22/Cys-70, Cys-36/Cys-85, Cys-39/Cys-123, Cys-47/Cys-101, Cys-51/Cys-103, and Cys-106/Cys-113. Residues Asn-26 and Asn-43 are each glycosylated (N-linked (GlcNAc...) asparagine).

The protein belongs to the glycoprotein hormones subunit beta family. Heterodimer. The active follitropin is a heterodimer composed of an alpha chain/CGA shared with other hormones and a unique beta chain/FSHB shown here.

The protein resides in the secreted. Its function is as follows. Together with the alpha chain CGA constitutes follitropin, the follicle-stimulating hormone, and provides its biological specificity to the hormone heterodimer. Binds FSHR, a G protein-coupled receptor, on target cells to activate downstream signaling pathways. Follitropin is involved in follicle development and spermatogenesis in reproductive organs. The chain is Follitropin subunit beta (Fshb) from Mus musculus (Mouse).